Here is a 762-residue protein sequence, read N- to C-terminus: Hyperosmolality-gated Ca2+ permeable channel 2.2 (762 aa).

10 helical membrane-spanning segments follow: residues 3–23, 90–110, 144–164, 354–374, 402–422, 445–465, 500–520, 557–577, 594–614, and 615–635; these read VSAL…LVSL, MVIC…AFVL, LWVH…LLYF, IATL…VTFV, VITG…VPPL, KILY…GSVI, GWAG…NLIA, VIAP…YLIY, QYWP…QVIA, and LGFF…PLIL.

Belongs to the CSC1 (TC 1.A.17) family.

The protein localises to the membrane. In terms of biological role, acts as an osmosensitive calcium-permeable cation channel. This chain is Hyperosmolality-gated Ca2+ permeable channel 2.2, found in Arabidopsis thaliana (Mouse-ear cress).